The following is a 245-amino-acid chain: Chloride intracellular channel protein 2 (245 aa).

The tract at residues 1–96 (MASLALNTQA…EEFLEKTLAP (96 aa)) is required for insertion into the membrane. Glu25 is a binding site for glutathione. Residues 30–33 (CPFC) carry the G-site motif. Cys30 and Cys33 form a disulfide bridge. A helical transmembrane segment spans residues 32 to 52 (FCQRLFMILWLKGVKFNVTTI). A GST C-terminal domain is found at 76–239 (NKELKTDFIK…PEDKEIENTY (164 aa)). Residue His227 participates in glutathione binding.

This sequence belongs to the chloride channel CLIC family. In terms of assembly, monomer. Interacts with TRAPPC2 and RYR2.

The protein resides in the cytoplasm. The protein localises to the membrane. It catalyses the reaction chloride(in) = chloride(out). The enzyme catalyses tert-butyl hydroperoxide + 2 glutathione = tert-butanol + glutathione disulfide + H2O. The catalysed reaction is cumene hydroperoxide + 2 glutathione = 2-phenylpropan-2-ol + glutathione disulfide + H2O. In the soluble state, catalyzes glutaredoxin-like thiol disulfide exchange reactions with reduced glutathione as electron donor. Displays weak glutathione peroxidase activity. Can insert into membranes and form chloride ion channels. Membrane insertion seems to be redox-regulated and may occur only under oxidizing conditions. Modulates the activity of RYR2 and inhibits calcium influx. This Rattus norvegicus (Rat) protein is Chloride intracellular channel protein 2.